The sequence spans 415 residues: MVVSVQEIGQRAKTAATDVAGLTITTRNDLLRQMSQALLDNQSAIMAANKEDIAAYANTLSQPMIKRLTLDQPTIKAIATSLLAVVALPDPLAGPFDTWQTHVDLKIVKRVVPLGVVAMIYEARPNVTIDAAALTLKSGNAVILRGGKEAIHSNTVLANILRDVLRDNALNPDIIQLITDTSHESVNVLLNMRDYVDVLIPRGSAKFIDFVVANATVPVIETGAGNTHIFVDQSADQKQAIAIIHNAKTQKPAVCNAAEKLLVHVAIAAEFIPKITEKLVRAHVELRGDQASHQLDPRISLASEQDWDTEYNDLIMGIKIVSGTNDAIDWINNHTTHHSETIISKSSENVAQFMNQVDAAVVYQNASSRFTDGFEFGFGAEIGISTQKLHARGPMGLPALTTIKYEVFGQGQIRE.

Belongs to the gamma-glutamyl phosphate reductase family.

It localises to the cytoplasm. It catalyses the reaction L-glutamate 5-semialdehyde + phosphate + NADP(+) = L-glutamyl 5-phosphate + NADPH + H(+). Its pathway is amino-acid biosynthesis; L-proline biosynthesis; L-glutamate 5-semialdehyde from L-glutamate: step 2/2. Catalyzes the NADPH-dependent reduction of L-glutamate 5-phosphate into L-glutamate 5-semialdehyde and phosphate. The product spontaneously undergoes cyclization to form 1-pyrroline-5-carboxylate. This Leuconostoc citreum (strain KM20) protein is Gamma-glutamyl phosphate reductase.